The primary structure comprises 564 residues: Type 2 DNA topoisomerase 6 subunit B (564 aa).

ATP contacts are provided by residues Asn-46, Asp-78, 99-100 (TK), 109-116 (GQQGIGIS), and Lys-471.

It belongs to the TOP6B family. Homodimer. Heterotetramer of two Top6A and two Top6B chains.

It catalyses the reaction ATP-dependent breakage, passage and rejoining of double-stranded DNA.. Functionally, relaxes both positive and negative superturns and exhibits a strong decatenase activity. This is Type 2 DNA topoisomerase 6 subunit B from Pyrococcus abyssi (strain GE5 / Orsay).